Reading from the N-terminus, the 483-residue chain is Aspartyl/glutamyl-tRNA(Asn/Gln) amidotransferase subunit B (483 aa).

This sequence belongs to the GatB/GatE family. GatB subfamily. As to quaternary structure, heterotrimer of A, B and C subunits.

It carries out the reaction L-glutamyl-tRNA(Gln) + L-glutamine + ATP + H2O = L-glutaminyl-tRNA(Gln) + L-glutamate + ADP + phosphate + H(+). The enzyme catalyses L-aspartyl-tRNA(Asn) + L-glutamine + ATP + H2O = L-asparaginyl-tRNA(Asn) + L-glutamate + ADP + phosphate + 2 H(+). In terms of biological role, allows the formation of correctly charged Asn-tRNA(Asn) or Gln-tRNA(Gln) through the transamidation of misacylated Asp-tRNA(Asn) or Glu-tRNA(Gln) in organisms which lack either or both of asparaginyl-tRNA or glutaminyl-tRNA synthetases. The reaction takes place in the presence of glutamine and ATP through an activated phospho-Asp-tRNA(Asn) or phospho-Glu-tRNA(Gln). This Anaplasma phagocytophilum (strain HZ) protein is Aspartyl/glutamyl-tRNA(Asn/Gln) amidotransferase subunit B.